The chain runs to 304 residues: Porphobilinogen deaminase (304 aa).

S-(dipyrrolylmethanemethyl)cysteine is present on cysteine 241.

Belongs to the HMBS family. In terms of assembly, monomer. Dipyrromethane is required as a cofactor.

It carries out the reaction 4 porphobilinogen + H2O = hydroxymethylbilane + 4 NH4(+). It participates in porphyrin-containing compound metabolism; protoporphyrin-IX biosynthesis; coproporphyrinogen-III from 5-aminolevulinate: step 2/4. Its function is as follows. Tetrapolymerization of the monopyrrole PBG into the hydroxymethylbilane pre-uroporphyrinogen in several discrete steps. The sequence is that of Porphobilinogen deaminase from Vesicomyosocius okutanii subsp. Calyptogena okutanii (strain HA).